The chain runs to 201 residues: Holliday junction branch migration complex subunit RuvA (201 aa).

The domain I stretch occupies residues 1 to 64 (MFAYIKGVLA…EFSHTLYGFL (64 aa)). The segment at 65–143 (SYQERDIFEI…AIGHLDTSDH (79 aa)) is domain II. The tract at residues 144 to 153 (IEPLTQDPKS) is flexible linker. Positions 153–201 (SKSVQDAMLALINLGYNQTTAQKAIKQGMKELPEEIDLAQLITVALKHV) are domain III.

This sequence belongs to the RuvA family. As to quaternary structure, homotetramer. Forms an RuvA(8)-RuvB(12)-Holliday junction (HJ) complex. HJ DNA is sandwiched between 2 RuvA tetramers; dsDNA enters through RuvA and exits via RuvB. An RuvB hexamer assembles on each DNA strand where it exits the tetramer. Each RuvB hexamer is contacted by two RuvA subunits (via domain III) on 2 adjacent RuvB subunits; this complex drives branch migration. In the full resolvosome a probable DNA-RuvA(4)-RuvB(12)-RuvC(2) complex forms which resolves the HJ.

The protein localises to the cytoplasm. Functionally, the RuvA-RuvB-RuvC complex processes Holliday junction (HJ) DNA during genetic recombination and DNA repair, while the RuvA-RuvB complex plays an important role in the rescue of blocked DNA replication forks via replication fork reversal (RFR). RuvA specifically binds to HJ cruciform DNA, conferring on it an open structure. The RuvB hexamer acts as an ATP-dependent pump, pulling dsDNA into and through the RuvAB complex. HJ branch migration allows RuvC to scan DNA until it finds its consensus sequence, where it cleaves and resolves the cruciform DNA. The protein is Holliday junction branch migration complex subunit RuvA of Protochlamydia amoebophila (strain UWE25).